The sequence spans 567 residues: ERO1-like protein 2 (567 aa).

A signal peptide spans 1 to 22 (MKIAKGLVGLLILYKNVCQVLC). Residue asparagine 49 is glycosylated (N-linked (GlcNAc...) asparagine). 4 disulfide bridges follow: cysteine 88-cysteine 386, cysteine 98-cysteine 103, cysteine 154-cysteine 325, and cysteine 389-cysteine 392. FAD contacts are provided by arginine 188, threonine 190, tryptophan 201, serine 258, histidine 261, and lysine 290. Residue cysteine 389 is the Nucleophile of the active site. Residue cysteine 392 is part of the active site. N-linked (GlcNAc...) asparagine glycosylation occurs at asparagine 546.

Belongs to the EROs family. In terms of assembly, may function both as a monomer and a homodimer. FAD serves as cofactor. N-glycosylated.

The protein localises to the endoplasmic reticulum membrane. Essential oxidoreductase that oxidizes proteins in the endoplasmic reticulum to produce disulfide bonds. Acts by oxidizing directly pdi1 isomerase through a direct disulfide exchange. Does not act as a direct oxidant of folding substrate, but relies on pdi1 to transfer oxidizing equivalent. Does not oxidize all pdi related proteins, suggesting that it can discriminate between pdi1 and related proteins. Its reoxidation probably involves electron transfer to molecular oxygen via FAD. Acts independently of glutathione. May be responsible for a significant proportion of reactive oxygen species (ROS) in the cell, thereby being a source of oxidative stress. The polypeptide is ERO1-like protein 2 (ero12) (Schizosaccharomyces pombe (strain 972 / ATCC 24843) (Fission yeast)).